The primary structure comprises 212 residues: Glycerol-3-phosphate acyltransferase (212 aa).

5 helical membrane passes run 3–23 (LILL…LWIG), 69–89 (LLPM…FFAI), 110–130 (AGIL…IFFF), 143–163 (VIAA…HFLL), and 165–185 (DYDF…IIRH).

Belongs to the PlsY family. Probably interacts with PlsX.

Its subcellular location is the cell membrane. It carries out the reaction an acyl phosphate + sn-glycerol 3-phosphate = a 1-acyl-sn-glycero-3-phosphate + phosphate. The protein operates within lipid metabolism; phospholipid metabolism. Its function is as follows. Catalyzes the transfer of an acyl group from acyl-phosphate (acyl-PO(4)) to glycerol-3-phosphate (G3P) to form lysophosphatidic acid (LPA). This enzyme utilizes acyl-phosphate as fatty acyl donor, but not acyl-CoA or acyl-ACP. This Streptococcus mutans serotype c (strain ATCC 700610 / UA159) protein is Glycerol-3-phosphate acyltransferase.